Reading from the N-terminus, the 159-residue chain is Neuroglobin (159 aa).

Residues 3 to 151 (KLSSKDKELI…VVASMSRGWA (149 aa)) enclose the Globin domain. Heme b is bound by residues His66 and His98.

Belongs to the globin family. As to quaternary structure, monomer. Homodimers and homotetramers. Mainly monomeric but also detected as part of homodimers and homotetramers.

The protein localises to the cytoplasm. The protein resides in the cytosol. It is found in the mitochondrion matrix. The catalysed reaction is Fe(III)-heme b-[protein] + nitric oxide + H2O = Fe(II)-heme b-[protein] + nitrite + 2 H(+). Functionally, monomeric globin with a bis-histidyl six-coordinate heme-iron atom through which it can bind dioxygen, carbon monoxide and nitric oxide. Could help transport oxygen and increase its availability to the metabolically active neuronal tissues, though its low quantity in tissues as well as its high affinity for dioxygen, which may limit its oxygen-releasing ability, argue against it. The ferrous/deoxygenated form exhibits a nitrite reductase activity and it could produce nitric oxide which in turn inhibits cellular respiration in response to hypoxia. In its ferrous/deoxygenated state, it may also exhibit GDI (Guanine nucleotide Dissociation Inhibitor) activity toward heterotrimeric G-alpha proteins, thereby regulating signal transduction to facilitate neuroprotective responses in the wake of hypoxia and associated oxidative stress. The chain is Neuroglobin (ngb) from Tetraodon nigroviridis (Spotted green pufferfish).